A 467-amino-acid polypeptide reads, in one-letter code: ATP-dependent protease ATPase subunit HslU (467 aa).

ATP-binding positions include V22 and G64–E69. The segment at Q149 to E192 is disordered. Basic and acidic residues predominate over residues E178–E192. Positions 280, 345, and 417 each coordinate ATP.

The protein belongs to the ClpX chaperone family. HslU subfamily. As to quaternary structure, a double ring-shaped homohexamer of HslV is capped on each side by a ring-shaped HslU homohexamer. The assembly of the HslU/HslV complex is dependent on binding of ATP.

It localises to the cytoplasm. Its function is as follows. ATPase subunit of a proteasome-like degradation complex; this subunit has chaperone activity. The binding of ATP and its subsequent hydrolysis by HslU are essential for unfolding of protein substrates subsequently hydrolyzed by HslV. HslU recognizes the N-terminal part of its protein substrates and unfolds these before they are guided to HslV for hydrolysis. This Staphylococcus aureus (strain bovine RF122 / ET3-1) protein is ATP-dependent protease ATPase subunit HslU.